A 280-amino-acid polypeptide reads, in one-letter code: Golgi phosphoprotein 3-like A (280 aa).

Residues 1–32 form a disordered region; it reads MTTLIRRGRRAEEGQERRADSEDSIKDKDEEE. The segment covering 10-32 has biased composition (basic and acidic residues); sequence RAEEGQERRADSEDSIKDKDEEE. 4 residues coordinate a 1,2-diacyl-sn-glycero-3-phospho-(1D-myo-inositol 4-phosphate): Trp62, Arg71, Arg152, and Arg155. Positions 171-182 are beta-hairpin required for oligomerization; it reads EKQNFLLFDMTT.

Belongs to the GOLPH3/VPS74 family. As to quaternary structure, homooligomer.

It localises to the golgi apparatus. The protein localises to the golgi stack membrane. Its subcellular location is the trans-Golgi network membrane. In terms of biological role, phosphatidylinositol-4-phosphate-binding protein that may play a role in the process of vesicle budding at the Golgi and anterograde transport to the plasma membrane. This chain is Golgi phosphoprotein 3-like A (golph3l-a), found in Xenopus laevis (African clawed frog).